The sequence spans 538 residues: Protein PNS1 (538 aa).

Residues 1-54 show a composition bias toward low complexity; the sequence is MGESDAYYNGGQQQQYNGGYQQQYQPQPPAASYQAPPQQPYQQQPYQQGPPQNG. Residues 1–67 are disordered; the sequence is MGESDAYYNG…GNGYMPAQGY (67 aa). Topologically, residues 1–88 are cytoplasmic; the sequence is MGESDAYYNG…FKIAKPKYND (88 aa). The chain crosses the membrane as a helical span at residues 89 to 109; the sequence is LWAGILLILVFAGFVVVSGLA. Topologically, residues 110 to 137 are extracellular; it reads LQGYSANKGNAGDGIYNNKNDFSPNTST. An N-linked (GlcNAc...) asparagine glycan is attached at asparagine 134. Residues 138-158 form a helical membrane-spanning segment; that stretch reads VILFMFVLAVAFVLSYAYVWM. The Cytoplasmic segment spans residues 159–165; that stretch reads ARLFPKQ. Residues 166-186 traverse the membrane as a helical segment; the sequence is FIWVTGILNVCWAIGTAIFYL. At 187 to 191 the chain is on the extracellular side; that stretch reads WRKYW. The helical transmembrane segment at 192–212 threads the bilayer; the sequence is SAGIVFLIFGLFMAFCFWTWI. Topologically, residues 213-239 are cytoplasmic; the sequence is SRIPFSALMLKTTIDVSKKYGHVYLVS. Residues 240–260 form a helical membrane-spanning segment; the sequence is LIGGIIATAFSAWYAITLVGI. The Extracellular segment spans residues 261–280; the sequence is YVKYQPAQDNPSCADGGCGK. A helical membrane pass occupies residues 281-301; that stretch reads GKVIGLIAFITFAMYWFSEWL. Over 302–335 the chain is Cytoplasmic; the sequence is KNTIHTTIAGVYGSWYFNPHNFPKDATRASAKRA. A helical transmembrane segment spans residues 336–356; the sequence is LTYSFGSIALGSLLVAIIQFL. Topologically, residues 357 to 372 are extracellular; the sequence is RQICNAARNQEGADGS. The helical transmembrane segment at 373-393 threads the bilayer; sequence FVGYAIFCCISCLLGLLEWAV. Residues 394 to 434 are Cytoplasmic-facing; the sequence is EFINRYAFCHIALYGKAYFAAAKDTWKMIKDRGIDALINDC. The helical transmembrane segment at 435–455 threads the bilayer; that stretch reads LIGPVLSFGALFIAYACALLA. The Extracellular segment spans residues 456 to 474; the sequence is YLYLYFTDPAYNSDGQYTA. Residues 475 to 495 form a helical membrane-spanning segment; sequence VVMAFSFLIGFQIANVFTTPI. Topologically, residues 496–538 are cytoplasmic; that stretch reads SSGIETIFVAAGWDPQVMWRDHPELYNEMVRVYPKVQQVIKDR.

The protein belongs to the CTL (choline transporter-like) family.

It is found in the cell membrane. In terms of biological role, probably involved in transport through the plasma membrane. The chain is Protein PNS1 (PNS1) from Gibberella zeae (strain ATCC MYA-4620 / CBS 123657 / FGSC 9075 / NRRL 31084 / PH-1) (Wheat head blight fungus).